We begin with the raw amino-acid sequence, 155 residues long: 6,7-dimethyl-8-ribityllumazine synthase (155 aa).

5-amino-6-(D-ribitylamino)uracil contacts are provided by residues Phe-23, 57 to 59 (AFE), and 81 to 83 (AVI). 86–87 (ST) is a (2S)-2-hydroxy-3-oxobutyl phosphate binding site. Catalysis depends on His-89, which acts as the Proton donor. 5-amino-6-(D-ribitylamino)uracil is bound at residue Phe-114. Arg-128 contacts (2S)-2-hydroxy-3-oxobutyl phosphate.

The protein belongs to the DMRL synthase family.

It catalyses the reaction (2S)-2-hydroxy-3-oxobutyl phosphate + 5-amino-6-(D-ribitylamino)uracil = 6,7-dimethyl-8-(1-D-ribityl)lumazine + phosphate + 2 H2O + H(+). It functions in the pathway cofactor biosynthesis; riboflavin biosynthesis; riboflavin from 2-hydroxy-3-oxobutyl phosphate and 5-amino-6-(D-ribitylamino)uracil: step 1/2. Its function is as follows. Catalyzes the formation of 6,7-dimethyl-8-ribityllumazine by condensation of 5-amino-6-(D-ribitylamino)uracil with 3,4-dihydroxy-2-butanone 4-phosphate. This is the penultimate step in the biosynthesis of riboflavin. This chain is 6,7-dimethyl-8-ribityllumazine synthase, found in Dehalococcoides mccartyi (strain ATCC BAA-2100 / JCM 16839 / KCTC 5957 / BAV1).